The sequence spans 233 residues: Octanoyltransferase (233 aa).

The region spanning 36–211 is the BPL/LPL catalytic domain; it reads DTTPDEIWLV…EFTRQLGYPT (176 aa). Residues 75 to 82, 142 to 144, and 155 to 157 each bind substrate; these read RGGQITYH, SLG, and GLA. Catalysis depends on Cys-173, which acts as the Acyl-thioester intermediate.

This sequence belongs to the LipB family.

Its subcellular location is the cytoplasm. The catalysed reaction is octanoyl-[ACP] + L-lysyl-[protein] = N(6)-octanoyl-L-lysyl-[protein] + holo-[ACP] + H(+). It participates in protein modification; protein lipoylation via endogenous pathway; protein N(6)-(lipoyl)lysine from octanoyl-[acyl-carrier-protein]: step 1/2. Its function is as follows. Catalyzes the transfer of endogenously produced octanoic acid from octanoyl-acyl-carrier-protein onto the lipoyl domains of lipoate-dependent enzymes. Lipoyl-ACP can also act as a substrate although octanoyl-ACP is likely to be the physiological substrate. The protein is Octanoyltransferase of Yersinia pseudotuberculosis serotype O:1b (strain IP 31758).